Consider the following 537-residue polypeptide: MFLLLKPLLSLHDLSLNLLSVMFHGETLKASVDGVGINMSTMWRETRNVFIVPLFKCIVVMCLIISLLVFVESVYMNLVVLYVKLFNRKPEKVYKWEAMQEDMELGHQNYPMVLVQIPMYNEREVFELSIGAACRLTWPSDRLIVQVLDDSTDPAIMELVSMECTKWASKDININYERRENRNGYKAGALKHGMRHSYVKQCQYLAIFDADFQPEPDYLQRAIPFLIHNPEVALVQARWRFVNANTCLMTRMQEMSLNYHFMAEQQSGSTRHAFFGFNGTAGVWRMVAMEEAGGWKDRTTVEDMDLAVRVGLLGWKFIFVNDLEVKSELPSQFKAFRFQQHRWSCGPANLIRKMTMEIIHNKRVKIWKKFYVIYSFFFLRKIVVHFFTYFFYCVILPTSVFLPEVNIPNWSTIYVPSVITLLSAIATPRSFYLVIFWVLFENVMAMHRTKGTLIGLFEGGRVNEWVVTEKLGDTLNTKLLPQNGRLPKRVNLKEMMMGIYILCCACYDFAFGNAFLYLYLFMQATAFLISGVGFVGT.

The helical transmembrane segment at 50–70 (FIVPLFKCIVVMCLIISLLVF) threads the bilayer. Asp150 is a catalytic residue. 2 residues coordinate substrate: Asp209 and Asp211. Asp303 is a catalytic residue. Transmembrane regions (helical) follow at residues 382 to 402 (IVVH…SVFL), 418 to 438 (VITL…IFWV), 494 to 514 (EMMM…FGNA), and 515 to 535 (FLYL…VGFV).

This sequence belongs to the glycosyltransferase 2 family. Plant cellulose synthase-like A subfamily.

It localises to the golgi apparatus membrane. The enzyme catalyses GDP-mannose + (glucomannan)n = GDP + (glucomannan)n+1.. In terms of biological role, probable mannan synthase which consists of a 4-beta-mannosyltransferase activity on mannan using GDP-mannose. The beta-1,4-mannan product is the backbone for galactomannan synthesis by galactomannan galactosyltransferase. Galactomannan is a noncellulosic polysaccharides of plant cell wall. The protein is Probable glucomannan 4-beta-mannosyltransferase 15 of Arabidopsis thaliana (Mouse-ear cress).